The primary structure comprises 373 residues: SH3 domain-binding protein 5-like (373 aa).

A disordered region spans residues 1–36; that stretch reads MEGKEGPPCEVRLPTPGAEREGPVHPELGAFGESAS. Coiled-coil stretches lie at residues 35–98 and 170–258; these read ASDA…ESAR and WQEM…KLRY. Disordered regions lie at residues 274 to 308 and 332 to 373; these read ARRT…PADT and DLTD…SVSL. The segment covering 332–360 has biased composition (basic and acidic residues); the sequence is DLTDVTSLDGRETGAVESGGSRERGEDRG.

This sequence belongs to the SH3BP5 family.

Functions as a guanine nucleotide exchange factor (GEF) for rab11a. This chain is SH3 domain-binding protein 5-like (sh3bp5l), found in Xenopus laevis (African clawed frog).